We begin with the raw amino-acid sequence, 240 residues long: Ribonuclease PH (240 aa).

Phosphate contacts are provided by residues Arg-87 and 125 to 127 (GTR).

Belongs to the RNase PH family. In terms of assembly, homohexameric ring arranged as a trimer of dimers.

It catalyses the reaction tRNA(n+1) + phosphate = tRNA(n) + a ribonucleoside 5'-diphosphate. Phosphorolytic 3'-5' exoribonuclease that plays an important role in tRNA 3'-end maturation. Removes nucleotide residues following the 3'-CCA terminus of tRNAs; can also add nucleotides to the ends of RNA molecules by using nucleoside diphosphates as substrates, but this may not be physiologically important. Probably plays a role in initiation of 16S rRNA degradation (leading to ribosome degradation) during starvation. In Ruminiclostridium cellulolyticum (strain ATCC 35319 / DSM 5812 / JCM 6584 / H10) (Clostridium cellulolyticum), this protein is Ribonuclease PH.